Consider the following 252-residue polypeptide: Delta-like protein dsl-1 (252 aa).

The N-terminal stretch at 1 to 17 (MLKYLIFLAILISVVHS) is a signal peptide. In terms of domain architecture, DSL spans 120-164 (IKCNRYWHGLHCDHFCNDDFARTINRRCTQNGTLGCLEGFHGPNC). 6 disulfides stabilise this stretch: C122-C131, C135-C147, C155-C164, C173-C181, C175-C197, and C199-C209. Residues 169-210 (PADSCKCQNGGKCVSSLENTWAQNGSLICECRLGHFEGKHCE) enclose the EGF-like domain.

May interact with lin-12/Notch receptor.

It is found in the secreted. Probable secreted Notch ligand involved in the mediation of Notch signaling. Involved in the lin-12/Notch pathway-mediated signaling of cell fate in vulval precursor cells (VPCs), acting redundantly with lag-2, apx-1 and osm-11. May also be involved in glp-1/Notch signaling. This Caenorhabditis elegans protein is Delta-like protein dsl-1.